The primary structure comprises 280 residues: Phosphonates import ATP-binding protein PhnC (280 aa).

Positions 4-239 constitute an ABC transporter domain; sequence ITVTNLHKSY…VIDDIYGNIQ (236 aa). Residue 36–43 participates in ATP binding; that stretch reads GESGAGKS. Positions 246–280 are disordered; sequence GDDANADVAPTTSSDGGTDAAGGPDQQPASDPHLS.

The protein belongs to the ABC transporter superfamily. Phosphonates importer (TC 3.A.1.9.1) family. The complex is composed of two ATP-binding proteins (PhnC), two transmembrane proteins (PhnE) and a solute-binding protein (PhnD).

The protein localises to the cell membrane. The enzyme catalyses phosphonate(out) + ATP + H2O = phosphonate(in) + ADP + phosphate + H(+). In terms of biological role, part of the ABC transporter complex PhnCDE involved in phosphonates import. Responsible for energy coupling to the transport system. The protein is Phosphonates import ATP-binding protein PhnC of Halobacterium salinarum (strain ATCC 700922 / JCM 11081 / NRC-1) (Halobacterium halobium).